The chain runs to 624 residues: Serine/threonine-protein kinase ppk35 (624 aa).

In terms of domain architecture, Protein kinase spans 162-465; sequence FDLLVKLGQG…TIEIQKHPFF (304 aa). ATP is bound by residues 168–176 and lysine 191; that span reads LGQGGYGSV. Aspartate 285 serves as the catalytic Proton acceptor. Residues 466-548 form the AGC-kinase C-terminal domain; it reads KRLHWNGLRK…KYRPNARKPL (83 aa). Basic residues predominate over residues 545-559; the sequence is RKPLVGRHREKRQLR. Residues 545–617 form a disordered region; sequence RKPLVGRHRE…VHRLLERKGK (73 aa). A compositionally biased stretch (basic and acidic residues) spans 560-574; that stretch reads KEKPEKKNNSTKQKD. Residues 596–609 show a composition bias toward basic residues; that stretch reads SKTKGHKTKSSRVH.

Belongs to the protein kinase superfamily. Ser/Thr protein kinase family.

The protein localises to the cytoplasm. Its subcellular location is the nucleus. It localises to the nucleolus. It carries out the reaction L-seryl-[protein] + ATP = O-phospho-L-seryl-[protein] + ADP + H(+). The catalysed reaction is L-threonyl-[protein] + ATP = O-phospho-L-threonyl-[protein] + ADP + H(+). Its function is as follows. Has a role in meiosis. In Schizosaccharomyces pombe (strain 972 / ATCC 24843) (Fission yeast), this protein is Serine/threonine-protein kinase ppk35 (ppk35).